The following is a 420-amino-acid chain: Threonine aspartase 1 (420 aa).

Residues 1-23 are disordered; the sequence is MTMEKGMSSGEGLPSRSSQVSAG. The active-site Nucleophile is the T234.

This sequence belongs to the Ntn-hydrolase family. As to quaternary structure, intramolecular proteolysis generates 2 subunits, alpha and beta, which reassemble through a non-covalent association to form the fully active enzyme.

Functionally, protease responsible for KMT2A/MLL1 processing and activation. It also activates KMT2D/MLL2. Through substrate activation, it controls the expression of HOXA genes, and the expression of key cell cycle regulators including CCNA1, CCNB1, CCNE1 and CDKN2A. In Homo sapiens (Human), this protein is Threonine aspartase 1 (TASP1).